Here is a 252-residue protein sequence, read N- to C-terminus: Triosephosphate isomerase (252 aa).

Asparagine 10–lysine 12 lines the substrate pocket. Histidine 96 functions as the Electrophile in the catalytic mechanism. Catalysis depends on glutamate 168, which acts as the Proton acceptor. Residues glycine 174, serine 214, and glycine 235 to glycine 236 each bind substrate.

Belongs to the triosephosphate isomerase family. In terms of assembly, homodimer.

The protein localises to the cytoplasm. The catalysed reaction is D-glyceraldehyde 3-phosphate = dihydroxyacetone phosphate. The protein operates within carbohydrate biosynthesis; gluconeogenesis. Its pathway is carbohydrate degradation; glycolysis; D-glyceraldehyde 3-phosphate from glycerone phosphate: step 1/1. Involved in the gluconeogenesis. Catalyzes stereospecifically the conversion of dihydroxyacetone phosphate (DHAP) to D-glyceraldehyde-3-phosphate (G3P). The protein is Triosephosphate isomerase of Streptococcus pyogenes serotype M6 (strain ATCC BAA-946 / MGAS10394).